The primary structure comprises 150 residues: Large ribosomal subunit protein uL15 (150 aa).

Residues 1–57 (MTLRLESLKPNKGARRRKLRKGRGIAAGQGASCGFGMRGQKSRSGRPTRPGFEGGQM) form a disordered region. Residues 12-23 (KGARRRKLRKGR) show a composition bias toward basic residues. Over residues 25 to 37 (IAAGQGASCGFGM) the composition is skewed to gly residues.

The protein belongs to the universal ribosomal protein uL15 family. In terms of assembly, part of the 50S ribosomal subunit.

Its function is as follows. Binds to the 23S rRNA. The protein is Large ribosomal subunit protein uL15 of Synechococcus sp. (strain CC9311).